Reading from the N-terminus, the 421-residue chain is Phosphoribosylamine--glycine ligase (421 aa).

Positions 108 to 314 (KEIMVKYNVP…FAQNIDDIMM (207 aa)) constitute an ATP-grasp domain. 134–195 (IEEQGAPIVV…EEFLDGEEFS (62 aa)) contacts ATP. Residues E284 and N286 each coordinate Mg(2+).

Belongs to the GARS family. It depends on Mg(2+) as a cofactor. The cofactor is Mn(2+).

It catalyses the reaction 5-phospho-beta-D-ribosylamine + glycine + ATP = N(1)-(5-phospho-beta-D-ribosyl)glycinamide + ADP + phosphate + H(+). The protein operates within purine metabolism; IMP biosynthesis via de novo pathway; N(1)-(5-phospho-D-ribosyl)glycinamide from 5-phospho-alpha-D-ribose 1-diphosphate: step 2/2. The protein is Phosphoribosylamine--glycine ligase of Streptococcus pyogenes serotype M3 (strain SSI-1).